The chain runs to 598 residues: Nitrate/nitrite sensor protein NarX (598 aa).

Residues 1–14 (MLKRCLSPLTLVNQ) lie on the Cytoplasmic side of the membrane. The chain crosses the membrane as a helical span at residues 15-37 (VALIVLLSTAIGLAGMAVSGWLV). At 38–151 (QGVQGSAHAI…DRTTEMRIET (114 aa)) the chain is on the periplasmic side. The chain crosses the membrane as a helical span at residues 152-174 (VVLVHRVMAVFMALLLVFTIIWL). Residues 175–598 (RARLLQPWRQ…FTDVQGDTHE (424 aa)) lie on the Cytoplasmic side of the membrane. The HAMP domain maps to 176 to 228 (ARLLQPWRQLLAMASAVSHRDFTQRANISGRNEMAMLGTALNNMSAELAESYA). In terms of domain architecture, Histidine kinase spans 393–587 (TIARELHDSI…EVVVTFIPEK (195 aa)). At H399 the chain carries Phosphohistidine; by autocatalysis.

It is found in the cell inner membrane. The catalysed reaction is ATP + protein L-histidine = ADP + protein N-phospho-L-histidine.. Acts as a sensor for nitrate/nitrite and transduces signal of nitrate availability to the NarL protein and of both nitrate/nitrite to the NarP protein. NarX probably activates NarL and NarP by phosphorylation in the presence of nitrate. NarX also plays a negative role in controlling NarL activity, probably through dephosphorylation in the absence of nitrate. This is Nitrate/nitrite sensor protein NarX (narX) from Escherichia coli O157:H7.